The sequence spans 98 residues: Integration host factor subunit alpha (98 aa).

A disordered region spans residues 49–71; that stretch reads FGNFDLRDKNQRPGRNPKTGEDI.

This sequence belongs to the bacterial histone-like protein family. As to quaternary structure, heterodimer of an alpha and a beta chain.

This protein is one of the two subunits of integration host factor, a specific DNA-binding protein that functions in genetic recombination as well as in transcriptional and translational control. In Edwardsiella ictaluri (strain 93-146), this protein is Integration host factor subunit alpha.